Consider the following 87-residue polypeptide: Small ribosomal subunit protein uS19 (87 aa).

The protein belongs to the universal ribosomal protein uS19 family.

In terms of biological role, protein S19 forms a complex with S13 that binds strongly to the 16S ribosomal RNA. The polypeptide is Small ribosomal subunit protein uS19 (rpsS) (Mycoplasma genitalium (strain ATCC 33530 / DSM 19775 / NCTC 10195 / G37) (Mycoplasmoides genitalium)).